A 1627-amino-acid chain; its full sequence is DNA topoisomerase 2-beta (1627 aa).

Residues Asn117, Asn146, 174 to 176 (SSN), and 187 to 194 (GRNGYGAK) contribute to the ATP site. Residues 368–370 (KKK) form an interaction with DNA region. Residue 402–404 (QTK) coordinates ATP. The Toprim domain occupies 481–598 (CTLILTEGDS…SLLKHGFLEE (118 aa)). Residues Glu487, Asp567, and Asp569 each coordinate Mg(2+). In terms of domain architecture, Topo IIA-type catalytic spans 741–1194 (IPSLVDGLKP…SASDLWKEDL (454 aa)). Tyr831 acts as the O-(5'-phospho-DNA)-tyrosine intermediate in catalysis. The interaction with DNA stretch occupies residues 1016 to 1025 (KLQTSLTCNS). 4 disordered regions span residues 1115-1144 (AWKE…GSTS), 1224-1248 (KVGK…RRIV), 1283-1365 (EFGG…DSLL), and 1378-1627 (DFSK…DMFN). The span at 1131–1144 (NANDDASSASGSTS) shows a compositional bias: low complexity. A compositionally biased stretch (polar residues) spans 1296-1305 (TVNTAASGTK). Residues 1339–1349 (PWSDDESKSES) are compositionally biased toward basic and acidic residues. Acidic residues-rich tracts occupy residues 1381–1392 (KEEDDAHDDDDA) and 1412–1428 (REDE…DEYD). Basic and acidic residues-rich tracts occupy residues 1436 to 1448 (PSPE…KKNQ) and 1462 to 1471 (KTDDDTTKLD). Basic residues-rich tracts occupy residues 1542 to 1552 (GKGRGAKKRKT) and 1566 to 1578 (KAPK…KSKK). Acidic residues predominate over residues 1616–1627 (ESDEDDDFDMFN).

It belongs to the type II topoisomerase family. In terms of assembly, homodimer. Requires Mg(2+) as cofactor. Mn(2+) serves as cofactor. Ca(2+) is required as a cofactor.

It is found in the nucleus. The protein resides in the nucleolus. The protein localises to the nucleoplasm. The catalysed reaction is ATP-dependent breakage, passage and rejoining of double-stranded DNA.. Key decatenating enzyme that alters DNA topology by binding to two double-stranded DNA molecules, generating a double-stranded break in one of the strands, passing the intact strand through the broken strand, and religating the broken strand. Plays a role in B-cell differentiation. The sequence is that of DNA topoisomerase 2-beta (TOP2B) from Gallus gallus (Chicken).